We begin with the raw amino-acid sequence, 375 residues long: 23S rRNA (uracil(747)-C(5))-methyltransferase RlmC (375 aa).

[4Fe-4S] cluster contacts are provided by cysteine 3, cysteine 11, cysteine 14, and cysteine 87. Residues glutamine 212, phenylalanine 241, glutamate 262, and asparagine 307 each coordinate S-adenosyl-L-methionine. Residue cysteine 334 is the Nucleophile of the active site.

The protein belongs to the class I-like SAM-binding methyltransferase superfamily. RNA M5U methyltransferase family. RlmC subfamily.

It catalyses the reaction uridine(747) in 23S rRNA + S-adenosyl-L-methionine = 5-methyluridine(747) in 23S rRNA + S-adenosyl-L-homocysteine + H(+). Functionally, catalyzes the formation of 5-methyl-uridine at position 747 (m5U747) in 23S rRNA. This chain is 23S rRNA (uracil(747)-C(5))-methyltransferase RlmC, found in Yersinia enterocolitica serotype O:8 / biotype 1B (strain NCTC 13174 / 8081).